The primary structure comprises 389 residues: Lipid-A-disaccharide synthase (389 aa).

Belongs to the LpxB family.

The catalysed reaction is a lipid X + a UDP-2-N,3-O-bis[(3R)-3-hydroxyacyl]-alpha-D-glucosamine = a lipid A disaccharide + UDP + H(+). It participates in bacterial outer membrane biogenesis; LPS lipid A biosynthesis. Functionally, condensation of UDP-2,3-diacylglucosamine and 2,3-diacylglucosamine-1-phosphate to form lipid A disaccharide, a precursor of lipid A, a phosphorylated glycolipid that anchors the lipopolysaccharide to the outer membrane of the cell. The protein is Lipid-A-disaccharide synthase of Burkholderia orbicola (strain MC0-3).